A 156-amino-acid chain; its full sequence is ATP synthase subunit b (156 aa).

Residues 7–27 (LFAQMVVFLILAWFTMKFVWP) traverse the membrane as a helical segment.

Belongs to the ATPase B chain family. F-type ATPases have 2 components, F(1) - the catalytic core - and F(0) - the membrane proton channel. F(1) has five subunits: alpha(3), beta(3), gamma(1), delta(1), epsilon(1). F(0) has three main subunits: a(1), b(2) and c(10-14). The alpha and beta chains form an alternating ring which encloses part of the gamma chain. F(1) is attached to F(0) by a central stalk formed by the gamma and epsilon chains, while a peripheral stalk is formed by the delta and b chains.

The protein localises to the cell inner membrane. In terms of biological role, f(1)F(0) ATP synthase produces ATP from ADP in the presence of a proton or sodium gradient. F-type ATPases consist of two structural domains, F(1) containing the extramembraneous catalytic core and F(0) containing the membrane proton channel, linked together by a central stalk and a peripheral stalk. During catalysis, ATP synthesis in the catalytic domain of F(1) is coupled via a rotary mechanism of the central stalk subunits to proton translocation. Component of the F(0) channel, it forms part of the peripheral stalk, linking F(1) to F(0). The protein is ATP synthase subunit b of Paraburkholderia phymatum (strain DSM 17167 / CIP 108236 / LMG 21445 / STM815) (Burkholderia phymatum).